Consider the following 173-residue polypeptide: Crossover junction endodeoxyribonuclease RuvC (173 aa).

Active-site residues include D8, E67, and D139. D8, E67, and D139 together coordinate Mg(2+).

Belongs to the RuvC family. In terms of assembly, homodimer which binds Holliday junction (HJ) DNA. The HJ becomes 2-fold symmetrical on binding to RuvC with unstacked arms; it has a different conformation from HJ DNA in complex with RuvA. In the full resolvosome a probable DNA-RuvA(4)-RuvB(12)-RuvC(2) complex forms which resolves the HJ. It depends on Mg(2+) as a cofactor.

The protein localises to the cytoplasm. It carries out the reaction Endonucleolytic cleavage at a junction such as a reciprocal single-stranded crossover between two homologous DNA duplexes (Holliday junction).. In terms of biological role, the RuvA-RuvB-RuvC complex processes Holliday junction (HJ) DNA during genetic recombination and DNA repair. Endonuclease that resolves HJ intermediates. Cleaves cruciform DNA by making single-stranded nicks across the HJ at symmetrical positions within the homologous arms, yielding a 5'-phosphate and a 3'-hydroxyl group; requires a central core of homology in the junction. The consensus cleavage sequence is 5'-(A/T)TT(C/G)-3'. Cleavage occurs on the 3'-side of the TT dinucleotide at the point of strand exchange. HJ branch migration catalyzed by RuvA-RuvB allows RuvC to scan DNA until it finds its consensus sequence, where it cleaves and resolves the cruciform DNA. In Pseudoalteromonas atlantica (strain T6c / ATCC BAA-1087), this protein is Crossover junction endodeoxyribonuclease RuvC.